The sequence spans 388 residues: Salivary protein Tsal2A (388 aa).

Residues Met-1–Val-18 form the signal peptide. An N-linked (GlcNAc...) asparagine glycan is attached at Asn-260.

Belongs to the DNA/RNA non-specific endonuclease family. A divalent metal cation serves as cofactor. As to expression, saliva (at protein level).

It is found in the secreted. Binds double-stranded DNA (dsDNA) with high affinity. Binds double-stranded RNA. Binds single-stranded DNA with lower affinity and with a preference for purine-rich sequences. Shows residual nuclease activity for dsDNA. Facilitates blood meal intake by lowering the local viscosity created by the release of host DNA. The polypeptide is Salivary protein Tsal2A (Glossina morsitans morsitans (Savannah tsetse fly)).